Here is a 410-residue protein sequence, read N- to C-terminus: Cytosolic isocitrate dehydrogenase [NADP] (410 aa).

NADP(+) is bound by residues 77 to 79 and R84; that span reads TIT. T79 serves as a coordination point for substrate. Residues 96-102, R111, and R134 each bind substrate; that span reads SPNGTIR. K260 is an NADP(+) binding site. Mn(2+)-binding residues include D275 and D279. Residues 310 to 315 and N328 contribute to the NADP(+) site; that span reads GTVTRH.

Belongs to the isocitrate and isopropylmalate dehydrogenases family. The cofactor is Mg(2+). Mn(2+) serves as cofactor.

The protein localises to the cytoplasm. The protein resides in the cytosol. It catalyses the reaction D-threo-isocitrate + NADP(+) = 2-oxoglutarate + CO2 + NADPH. May supply 2-oxoglutarate for amino acid biosynthesis and ammonia assimilation via the glutamine synthetase/glutamate synthase (GS/GOGAT) pathway. May be involved in the production of NADPH to promote redox signaling or homeostasis in response to oxidative stress, or redox signaling linked to defense responses. The sequence is that of Cytosolic isocitrate dehydrogenase [NADP] from Arabidopsis thaliana (Mouse-ear cress).